Consider the following 234-residue polypeptide: Sperm-associated microtubule inner protein 5 (234 aa).

In terms of assembly, microtubule inner protein component of sperm flagellar doublet microtubules. In terms of tissue distribution, expressed in testis (at protein level). Strongly expressed in peritubular cells and Leydig cells and weakly expressed in the cytoplasm of spermatocytes.

Its subcellular location is the cytoplasm. The protein resides in the cytoskeleton. It is found in the flagellum axoneme. The protein localises to the nucleus. Microtubule inner protein (MIP) part of the dynein-decorated doublet microtubules (DMTs) in flagellum axoneme. May serve to reinforce and thus stabilize the microtubule structure in the sperm flagella. This Homo sapiens (Human) protein is Sperm-associated microtubule inner protein 5.